The primary structure comprises 135 residues: Transcription antitermination protein NusB (135 aa).

A disordered region spans residues 115 to 135 (ATPAESTGRGSAVDSIPGQPS).

Belongs to the NusB family.

In terms of biological role, involved in transcription antitermination. Required for transcription of ribosomal RNA (rRNA) genes. Binds specifically to the boxA antiterminator sequence of the ribosomal RNA (rrn) operons. The polypeptide is Transcription antitermination protein NusB (Frankia casuarinae (strain DSM 45818 / CECT 9043 / HFP020203 / CcI3)).